Here is a 137-residue protein sequence, read N- to C-terminus: uncharacterized protein (137 aa).

The next 3 helical transmembrane spans lie at 5–25, 79–99, and 109–129; these read ELLWPALITALATMLYLVLVI, IAAILGAVWLLGRILYAWGYY, and FALGSLSSMILVVGALLSILW.

This sequence belongs to the MAPEG family.

Its subcellular location is the cell membrane. This is an uncharacterized protein from Synechocystis sp. (strain ATCC 27184 / PCC 6803 / Kazusa).